The sequence spans 376 residues: 23S rRNA (uracil(747)-C(5))-methyltransferase RlmC (376 aa).

Positions 3, 11, 14, and 87 each coordinate [4Fe-4S] cluster. Positions 212, 241, 262, and 307 each coordinate S-adenosyl-L-methionine. Cysteine 334 acts as the Nucleophile in catalysis.

The protein belongs to the class I-like SAM-binding methyltransferase superfamily. RNA M5U methyltransferase family. RlmC subfamily.

It catalyses the reaction uridine(747) in 23S rRNA + S-adenosyl-L-methionine = 5-methyluridine(747) in 23S rRNA + S-adenosyl-L-homocysteine + H(+). In terms of biological role, catalyzes the formation of 5-methyl-uridine at position 747 (m5U747) in 23S rRNA. In Yersinia pestis bv. Antiqua (strain Antiqua), this protein is 23S rRNA (uracil(747)-C(5))-methyltransferase RlmC.